The following is a 198-amino-acid chain: Nucleoid occlusion factor SlmA (198 aa).

Residues 10–70 (NRREEILQSL…SLIEFIEDSL (61 aa)) enclose the HTH tetR-type domain. A DNA-binding region (H-T-H motif) is located at residues 33–52 (TTAKLAASVGVSEAALYRHF). Residues 117–145 (EQDKLQGRINQLFERIEAQLRQVLREKKM) adopt a coiled-coil conformation.

It belongs to the nucleoid occlusion factor SlmA family. In terms of assembly, homodimer. Interacts with FtsZ.

It is found in the cytoplasm. The protein resides in the nucleoid. Functionally, required for nucleoid occlusion (NO) phenomenon, which prevents Z-ring formation and cell division over the nucleoid. Acts as a DNA-associated cell division inhibitor that binds simultaneously chromosomal DNA and FtsZ, and disrupts the assembly of FtsZ polymers. SlmA-DNA-binding sequences (SBS) are dispersed on non-Ter regions of the chromosome, preventing FtsZ polymerization at these regions. This chain is Nucleoid occlusion factor SlmA, found in Enterobacter sp. (strain 638).